The primary structure comprises 235 residues: Large ribosomal subunit protein uL1 (235 aa).

This sequence belongs to the universal ribosomal protein uL1 family. In terms of assembly, part of the 50S ribosomal subunit.

In terms of biological role, binds directly to 23S rRNA. The L1 stalk is quite mobile in the ribosome, and is involved in E site tRNA release. Protein L1 is also a translational repressor protein, it controls the translation of the L11 operon by binding to its mRNA. The protein is Large ribosomal subunit protein uL1 of Synechococcus sp. (strain WH7803).